Here is a 100-residue protein sequence, read N- to C-terminus: Large ribosomal subunit protein uL23 (100 aa).

It belongs to the universal ribosomal protein uL23 family. Part of the 50S ribosomal subunit. Contacts protein L29, and trigger factor when it is bound to the ribosome.

One of the early assembly proteins it binds 23S rRNA. One of the proteins that surrounds the polypeptide exit tunnel on the outside of the ribosome. Forms the main docking site for trigger factor binding to the ribosome. The chain is Large ribosomal subunit protein uL23 from Prochlorococcus marinus (strain MIT 9515).